A 124-amino-acid chain; its full sequence is Snake venom vascular endothelial growth factor toxin apiscin (124 aa).

Residues 1-24 (MAAYLLAVAILFCIQGWPSGTVQG) form the signal peptide. Gln-25 is modified (pyrrolidone carboxylic acid). Cystine bridges form between Cys-38/Cys-80, Cys-69/Cys-115, and Cys-73/Cys-117.

It belongs to the PDGF/VEGF growth factor family. Snake venom VEGF subfamily. In terms of assembly, homodimer; disulfide-linked. Interacts with VEGF receptor-1 (FLT1) with a high affinity, whereas it binds to VEGF receptor-2 (KDR) with a low affinity. Does not bind VEGF receptor-3 (FLT4). In terms of tissue distribution, expressed by the venom gland.

It is found in the secreted. Functionally, snake venom VEGFs that may contribute to venom dispersion and prey subjugation by inducing vascular permeability and hypotension. This protein induces an increase in capillary permeability after intradermal injection, as well as a drastic hypotensive effect after intravenous injection. The hypotension is mediated by nitric oxide (NO), which is produced by VEGF-activated endothelium NO synthase. Also induces angiogenesis in vitro. Like other crotalid VEGFs, this protein interacts with VEGF receptor-1 (FLT1) with a high affinity, whereas it binds to VEGF receptor-2 (KDR) with a low affinity. This is Snake venom vascular endothelial growth factor toxin apiscin from Agkistrodon piscivorus piscivorus (Eastern cottonmouth).